A 233-amino-acid chain; its full sequence is C-type lectin domain family 2 member D2 (233 aa).

Positions 1 to 34 are disordered; the sequence is MPSSAHLQDAPPLLSRTLTQDEEQTSLRQSSSCG. At 1–76 the chain is on the cytoplasmic side; the sequence is MPSSAHLQDA…SPESPAKLPC (76 aa). The chain crosses the membrane as a helical; Signal-anchor for type II membrane protein span at residues 77-97; that stretch reads CYGVIMVLSVAVVALSVALSV. Residues 98 to 233 are Extracellular-facing; the sequence is KKTPQILTVK…KPNSYTSQCQ (136 aa). The region spanning 119–228 is the C-type lectin domain; it reads VGNKCYYFNE…KSICSKPNSY (110 aa). N-linked (GlcNAc...) asparagine glycosylation occurs at Asn-132.

The protein localises to the cell membrane. Its function is as follows. Lectin-type cell surface receptor. This chain is C-type lectin domain family 2 member D2 (Clec2d2), found in Rattus norvegicus (Rat).